We begin with the raw amino-acid sequence, 496 residues long: Probable malate:quinone oxidoreductase (496 aa).

Belongs to the MQO family. It depends on FAD as a cofactor.

The enzyme catalyses (S)-malate + a quinone = a quinol + oxaloacetate. Its pathway is carbohydrate metabolism; tricarboxylic acid cycle; oxaloacetate from (S)-malate (quinone route): step 1/1. This chain is Probable malate:quinone oxidoreductase, found in Flavobacterium psychrophilum (strain ATCC 49511 / DSM 21280 / CIP 103535 / JIP02/86).